The primary structure comprises 393 residues: tRNA(Met) cytidine acetate ligase (393 aa).

ATP contacts are provided by Gly-81, Asn-142, and Arg-167.

The protein belongs to the TmcAL family.

The protein resides in the cytoplasm. The enzyme catalyses cytidine(34) in elongator tRNA(Met) + acetate + ATP = N(4)-acetylcytidine(34) in elongator tRNA(Met) + AMP + diphosphate. Catalyzes the formation of N(4)-acetylcytidine (ac(4)C) at the wobble position of elongator tRNA(Met), using acetate and ATP as substrates. First activates an acetate ion to form acetyladenylate (Ac-AMP) and then transfers the acetyl group to tRNA to form ac(4)C34. In Bacillus cereus (strain AH820), this protein is tRNA(Met) cytidine acetate ligase.